We begin with the raw amino-acid sequence, 377 residues long: Cell division protein FtsZ (377 aa).

The span at 1-16 (MDSIVDDAIDEAEDMG) shows a compositional bias: acidic residues. The tract at residues 1-33 (MDSIVDDAIDEAEDMGDGSAEVGGPTDINRSGT) is disordered. GTP-binding positions include 57–61 (GAGGN), 144–146 (GTG), Glu-175, Arg-179, and Asp-222.

Belongs to the FtsZ family. As to quaternary structure, homodimer. Polymerizes to form a dynamic ring structure in a strictly GTP-dependent manner. Interacts directly with several other division proteins.

The protein resides in the cytoplasm. In terms of biological role, essential cell division protein that forms a contractile ring structure (Z ring) at the future cell division site. The regulation of the ring assembly controls the timing and the location of cell division. One of the functions of the FtsZ ring is to recruit other cell division proteins to the septum to produce a new cell wall between the dividing cells. Binds GTP and shows GTPase activity. The chain is Cell division protein FtsZ from Haloferax mediterranei (strain ATCC 33500 / DSM 1411 / JCM 8866 / NBRC 14739 / NCIMB 2177 / R-4) (Halobacterium mediterranei).